Here is a 485-residue protein sequence, read N- to C-terminus: Rhamnulokinase (485 aa).

An ATP-binding site is contributed by 8 to 12 (ASSGR). Substrate is bound by residues Gly-78 and 231 to 233 (HDT). Residue Asp-232 is the Proton acceptor of the active site. Thr-254 serves as a coordination point for ATP. Asn-291 provides a ligand contact to substrate. Gln-299 provides a ligand contact to ATP. Cys-348 and Cys-365 are disulfide-bonded. Gly-397 serves as a coordination point for ATP. Cys-408 and Cys-412 are joined by a disulfide.

Belongs to the rhamnulokinase family. Mg(2+) serves as cofactor.

The enzyme catalyses L-rhamnulose + ATP = L-rhamnulose 1-phosphate + ADP + H(+). Its pathway is carbohydrate degradation; L-rhamnose degradation; glycerone phosphate from L-rhamnose: step 2/3. In terms of biological role, involved in the catabolism of L-rhamnose (6-deoxy-L-mannose). Catalyzes the transfer of the gamma-phosphate group from ATP to the 1-hydroxyl group of L-rhamnulose to yield L-rhamnulose 1-phosphate. The protein is Rhamnulokinase of Yersinia pestis bv. Antiqua (strain Angola).